A 296-amino-acid chain; its full sequence is MSPLANRRFLKMHGAGNAIVVLDLRGTSIRVAPAEARAIAADAHSRFDQLMVVHDPVTPGTDAFMRIYNTDGSESGACGNGTRCVGYALLDDPAMARPAENGCLTLETKAGLVAVKRVTDRSFTVDMGQPRLRWDEIPLAEPFPDTRRIELQVGPIDDPILHSPAAVSMGNPHAIFFVERDPDTFDLGRIGPLLEAHPIFPERANISIAQVTSRDTIKLRVWERGAGLTLACGTAACATVVAAARLRMIGRAARVALPGGELSIEWRADDHVLMTGPVFLEGEGSLSPDLFAGLDG.

Substrate is bound by residues asparagine 17, glutamine 49, and asparagine 69. Residue cysteine 78 is the Proton donor of the active site. Residues 79–80 (GN), asparagine 171, asparagine 205, and 223–224 (ER) contribute to the substrate site. Cysteine 232 functions as the Proton acceptor in the catalytic mechanism. 233-234 (GT) contributes to the substrate binding site.

It belongs to the diaminopimelate epimerase family. Homodimer.

The protein localises to the cytoplasm. It catalyses the reaction (2S,6S)-2,6-diaminopimelate = meso-2,6-diaminopimelate. The protein operates within amino-acid biosynthesis; L-lysine biosynthesis via DAP pathway; DL-2,6-diaminopimelate from LL-2,6-diaminopimelate: step 1/1. In terms of biological role, catalyzes the stereoinversion of LL-2,6-diaminopimelate (L,L-DAP) to meso-diaminopimelate (meso-DAP), a precursor of L-lysine and an essential component of the bacterial peptidoglycan. The polypeptide is Diaminopimelate epimerase (Methylorubrum populi (strain ATCC BAA-705 / NCIMB 13946 / BJ001) (Methylobacterium populi)).